A 141-amino-acid polypeptide reads, in one-letter code: Large ribosomal subunit protein uL11 (141 aa).

It belongs to the universal ribosomal protein uL11 family. Part of the ribosomal stalk of the 50S ribosomal subunit. Interacts with L10 and the large rRNA to form the base of the stalk. L10 forms an elongated spine to which L12 dimers bind in a sequential fashion forming a multimeric L10(L12)X complex. In terms of processing, one or more lysine residues are methylated.

In terms of biological role, forms part of the ribosomal stalk which helps the ribosome interact with GTP-bound translation factors. In Exiguobacterium sibiricum (strain DSM 17290 / CCUG 55495 / CIP 109462 / JCM 13490 / 255-15), this protein is Large ribosomal subunit protein uL11.